The primary structure comprises 226 residues: tRNA (guanine-N(1)-)-methyltransferase (226 aa).

S-adenosyl-L-methionine-binding positions include glycine 110 and 130 to 135 (IGDFIL).

Belongs to the RNA methyltransferase TrmD family. As to quaternary structure, homodimer.

It is found in the cytoplasm. It carries out the reaction guanosine(37) in tRNA + S-adenosyl-L-methionine = N(1)-methylguanosine(37) in tRNA + S-adenosyl-L-homocysteine + H(+). Its function is as follows. Specifically methylates guanosine-37 in various tRNAs. The sequence is that of tRNA (guanine-N(1)-)-methyltransferase from Nitratiruptor sp. (strain SB155-2).